Here is a 635-residue protein sequence, read N- to C-terminus: Voltage-gated potassium channel KCNC4 (635 aa).

Positions 1–24 (MISSVCVSSYRGRKSGNKPPSKTC) are disordered. The tract at residues 1–28 (MISSVCVSSYRGRKSGNKPPSKTCLKEE) is inactivation gate. At 1 to 226 (MISSVCVSSY…EDPYSSRAAR (226 aa)) the chain is on the cytoplasmic side. Phosphoserine occurs at positions 8, 9, 15, and 21. Positions 116, 122, 143, and 144 each coordinate Zn(2+). A disordered region spans residues 160–180 (IFESPDGGGSGAGPSDEAGDD). The chain crosses the membrane as a helical span at residues 227–247 (VVAFASLFFILVSITTFCLET). N-linked (GlcNAc...) asparagine glycans are attached at residues asparagine 256 and asparagine 265. A helical membrane pass occupies residues 278-298 (EPILTYIEGVCVLWFTLEFLV). Residues 299–312 (RIVCCPDTLDFVKN) are Cytoplasmic-facing. The helical transmembrane segment at 313-333 (LLNIIDFVAILPFYLEVGLSG) threads the bilayer. A helical; Voltage-sensor transmembrane segment spans residues 345–364 (FLRVVRFVRILRIFKLTRHF). The Cytoplasmic segment spans residues 365-380 (VGLRVLGHTLRASTNE). A helical transmembrane segment spans residues 381 to 401 (FLLLIIFLALGVLIFATMIYY). The K(+) site is built by threonine 436, leucine 437, glycine 438, and tyrosine 439. Positions 436–441 (TLGYGD) match the Selectivity filter motif. A helical membrane pass occupies residues 452–472 (VGALCALAGVLTIAMPVPVIV). Topologically, residues 473–635 (NNFGMYYSLA…PTAGTLFLPH (163 aa)) are cytoplasmic. A disordered region spans residues 490-580 (KKRKKHVPRP…RRALRRSTTR (91 aa)). Residues 527–542 (AREEGMIERKRADSKQ) are compositionally biased toward basic and acidic residues.

Belongs to the potassium channel family. C (Shaw) (TC 1.A.1.2) subfamily. Kv3.4/KCNC4 sub-subfamily. In terms of assembly, homotetramer. Heterotetramer of potassium channel proteins. Post-translationally, phosphorylation of serine residues in the inactivation gate inhibits rapid channel closure.

Its subcellular location is the membrane. It catalyses the reaction K(+)(in) = K(+)(out). Its function is as follows. Voltage-gated potassium channel that opens in response to the voltage difference across the membrane, forming a potassium-selective channel through which potassium ions pass in accordance with their electrochemical gradient. The channel displays rapid activation and inactivation kinetics. In Homo sapiens (Human), this protein is Voltage-gated potassium channel KCNC4.